A 148-amino-acid chain; its full sequence is UPF0260 protein YcgN (148 aa).

Belongs to the UPF0260 family.

The protein is UPF0260 protein YcgN of Salmonella paratyphi A (strain AKU_12601).